The primary structure comprises 206 residues: Regulator of rDNA transcription protein 14 (206 aa).

The disordered stretch occupies residues F178 to D206. Phosphoserine occurs at positions 197, 202, and 203. Residues S197–D206 show a composition bias toward acidic residues.

This sequence belongs to the RRT14 family.

It localises to the nucleus. The protein localises to the nucleolus. Involved in ribosome biogenesis, probably through modulation of rDNA transcription. The polypeptide is Regulator of rDNA transcription protein 14 (RRT14) (Saccharomyces cerevisiae (strain ATCC 204508 / S288c) (Baker's yeast)).